The chain runs to 339 residues: MIKVAAAGGGTGGHLYPLLAILETLAKRVDVKVLFFAVKGKIDERVVRKDHPEFETVSIDVRGLLRPLHHPKNLWRTLKIGIATIEVKKHLKRFKPDLVVLTGGYISGVVGLAAKDLGIPIFVHEQNVVPGLAVKVLSQYAKKVFVSFERTRDYLREWQDKIVVTGCPVRETEKEAPLKDFVLVLGGSLGSEAINELMEKVYPELQETQFVHSTGSDDWTERLSVFPNVTALTYIDPMGAYWKKAIASISRAGASTIAEMMYYGVPGILIPWESSAESHQLENALEAERLGYAIVIRENEASPRKIIESIDKVVKKGKIEKMKENPASKISKEILGEIM.

UDP-N-acetyl-alpha-D-glucosamine-binding positions include 11 to 13 (TGG), N127, R170, S188, I235, and Q280.

Belongs to the glycosyltransferase 28 family. MurG subfamily.

The protein resides in the cell inner membrane. The enzyme catalyses di-trans,octa-cis-undecaprenyl diphospho-N-acetyl-alpha-D-muramoyl-L-alanyl-D-glutamyl-meso-2,6-diaminopimeloyl-D-alanyl-D-alanine + UDP-N-acetyl-alpha-D-glucosamine = di-trans,octa-cis-undecaprenyl diphospho-[N-acetyl-alpha-D-glucosaminyl-(1-&gt;4)]-N-acetyl-alpha-D-muramoyl-L-alanyl-D-glutamyl-meso-2,6-diaminopimeloyl-D-alanyl-D-alanine + UDP + H(+). It participates in cell wall biogenesis; peptidoglycan biosynthesis. In terms of biological role, cell wall formation. Catalyzes the transfer of a GlcNAc subunit on undecaprenyl-pyrophosphoryl-MurNAc-pentapeptide (lipid intermediate I) to form undecaprenyl-pyrophosphoryl-MurNAc-(pentapeptide)GlcNAc (lipid intermediate II). This chain is UDP-N-acetylglucosamine--N-acetylmuramyl-(pentapeptide) pyrophosphoryl-undecaprenol N-acetylglucosamine transferase, found in Thermotoga maritima (strain ATCC 43589 / DSM 3109 / JCM 10099 / NBRC 100826 / MSB8).